The chain runs to 229 residues: uncharacterized protein (229 aa).

A PilZ domain is found at 102 to 217; it reads RRRTVRVEPD…REKVRRYVFE (116 aa).

The protein to A.aeolicus aq_820 and aq_1211.

This is an uncharacterized protein from Aquifex aeolicus (strain VF5).